Here is a 526-residue protein sequence, read N- to C-terminus: Bifunctional purine biosynthesis protein PurH (526 aa).

The MGS-like domain occupies 1–147; sequence MTKIERALIS…KNWAHVAIVT (147 aa).

It belongs to the PurH family.

The enzyme catalyses (6R)-10-formyltetrahydrofolate + 5-amino-1-(5-phospho-beta-D-ribosyl)imidazole-4-carboxamide = 5-formamido-1-(5-phospho-D-ribosyl)imidazole-4-carboxamide + (6S)-5,6,7,8-tetrahydrofolate. It catalyses the reaction IMP + H2O = 5-formamido-1-(5-phospho-D-ribosyl)imidazole-4-carboxamide. It participates in purine metabolism; IMP biosynthesis via de novo pathway; 5-formamido-1-(5-phospho-D-ribosyl)imidazole-4-carboxamide from 5-amino-1-(5-phospho-D-ribosyl)imidazole-4-carboxamide (10-formyl THF route): step 1/1. The protein operates within purine metabolism; IMP biosynthesis via de novo pathway; IMP from 5-formamido-1-(5-phospho-D-ribosyl)imidazole-4-carboxamide: step 1/1. This Laribacter hongkongensis (strain HLHK9) protein is Bifunctional purine biosynthesis protein PurH.